A 353-amino-acid chain; its full sequence is Chorismate synthase (353 aa).

NADP(+) contacts are provided by Arg48 and Arg54. FMN-binding positions include Arg125–Ser127, Asn238–Ala239, Gly278, Lys293–Ser297, and Arg319.

It belongs to the chorismate synthase family. As to quaternary structure, homotetramer. FMNH2 serves as cofactor.

It carries out the reaction 5-O-(1-carboxyvinyl)-3-phosphoshikimate = chorismate + phosphate. It participates in metabolic intermediate biosynthesis; chorismate biosynthesis; chorismate from D-erythrose 4-phosphate and phosphoenolpyruvate: step 7/7. In terms of biological role, catalyzes the anti-1,4-elimination of the C-3 phosphate and the C-6 proR hydrogen from 5-enolpyruvylshikimate-3-phosphate (EPSP) to yield chorismate, which is the branch point compound that serves as the starting substrate for the three terminal pathways of aromatic amino acid biosynthesis. This reaction introduces a second double bond into the aromatic ring system. The sequence is that of Chorismate synthase from Bordetella pertussis (strain Tohama I / ATCC BAA-589 / NCTC 13251).